The primary structure comprises 174 residues: MANRKKQSKGKDKDSGWEERVVQVKRVTKVVKGGKKLSFRVILVIGNEQGQVGVGVGKASDVIGAVKKGVTDAKKHLVTVPLTKSNSIPHPINGISGAAKVILRPSAPGSGVIAGGSVRTVLELSGVQNILAKQLGSNNTLNNARAVLNGLTQLRTFSEAAKDRGVPIESLYST.

One can recognise an S5 DRBM domain in the interval 17–80; that stretch reads WEERVVQVKR…TDAKKHLVTV (64 aa).

The protein belongs to the universal ribosomal protein uS5 family. Part of the 30S ribosomal subunit. Contacts protein S4.

Its subcellular location is the plastid. It localises to the chloroplast. In terms of biological role, with S4 and S12 plays an important role in translational accuracy. The chain is Small ribosomal subunit protein uS5c (rps5) from Pyropia yezoensis (Susabi-nori).